Reading from the N-terminus, the 318-residue chain is tRNA dimethylallyltransferase (318 aa).

An ATP-binding site is contributed by 28 to 35; that stretch reads GPTGAGKS. A substrate-binding site is contributed by 30–35; sequence TGAGKS. The segment at 53 to 56 is interaction with substrate tRNA; it reads DSMQ.

This sequence belongs to the IPP transferase family. In terms of assembly, monomer. It depends on Mg(2+) as a cofactor.

It catalyses the reaction adenosine(37) in tRNA + dimethylallyl diphosphate = N(6)-dimethylallyladenosine(37) in tRNA + diphosphate. Functionally, catalyzes the transfer of a dimethylallyl group onto the adenine at position 37 in tRNAs that read codons beginning with uridine, leading to the formation of N6-(dimethylallyl)adenosine (i(6)A). The sequence is that of tRNA dimethylallyltransferase from Parafrankia sp. (strain EAN1pec).